The chain runs to 128 residues: Fluoride-specific ion channel FluC (128 aa).

4 consecutive transmembrane segments (helical) span residues 7-27 (AVLLVGAGGFAGASARYLIAV), 34-54 (TGFPMATMLVNVLGCFLIGMI), 70-90 (LLLATGFCGGFTTFSSYMYEI), and 104-124 (LYLIGSLVGGMVFLYLGMALA). The Na(+) site is built by Gly78 and Thr81.

This sequence belongs to the fluoride channel Fluc/FEX (TC 1.A.43) family.

The protein localises to the cell inner membrane. It catalyses the reaction fluoride(in) = fluoride(out). Na(+) is not transported, but it plays an essential structural role and its presence is essential for fluoride channel function. Its function is as follows. Fluoride-specific ion channel. Important for reducing fluoride concentration in the cell, thus reducing its toxicity. This is Fluoride-specific ion channel FluC from Prosthecochloris aestuarii (strain DSM 271 / SK 413).